The following is a 340-amino-acid chain: Mitochondrial import receptor subunit TOM40 homolog 2 (340 aa).

The segment at 1 to 37 is disordered; sequence MGNVMASTADAESSRGRGHLSAGLRLPEAPQYSGGVP.

The protein belongs to the Tom40 family. Forms part of the preprotein translocase of the outer mitochondrial membrane (TOM complex). Interacts with mitochondrial targeting sequences. In terms of tissue distribution, only expressed in the male germline, detected in primary spermatocytes as well as post-meiotic stages. Not detected in stem cells and spermatogonia near the tip of the testis.

The protein localises to the mitochondrion outer membrane. Channel-forming protein essential for import of protein precursors into mitochondria. The protein is Mitochondrial import receptor subunit TOM40 homolog 2 of Drosophila melanogaster (Fruit fly).